A 337-amino-acid polypeptide reads, in one-letter code: Holliday junction branch migration complex subunit RuvB (337 aa).

A large ATPase domain (RuvB-L) region spans residues 4-184 (QDRIISAELK…FGIVQRLEFY (181 aa)). ATP is bound by residues Ile-23, Arg-24, Gly-65, Lys-68, Thr-69, Thr-70, 131–133 (EDY), Arg-174, Tyr-184, and Arg-221. Thr-69 lines the Mg(2+) pocket. The interval 185-255 (DVESLTTIVA…VAQRALDMLS (71 aa)) is small ATPAse domain (RuvB-S). The head domain (RuvB-H) stretch occupies residues 258–337 (SQGFDHLDRR…FNYQLPSDFK (80 aa)). Arg-313 and Arg-318 together coordinate DNA.

It belongs to the RuvB family. Homohexamer. Forms an RuvA(8)-RuvB(12)-Holliday junction (HJ) complex. HJ DNA is sandwiched between 2 RuvA tetramers; dsDNA enters through RuvA and exits via RuvB. An RuvB hexamer assembles on each DNA strand where it exits the tetramer. Each RuvB hexamer is contacted by two RuvA subunits (via domain III) on 2 adjacent RuvB subunits; this complex drives branch migration. In the full resolvosome a probable DNA-RuvA(4)-RuvB(12)-RuvC(2) complex forms which resolves the HJ.

It localises to the cytoplasm. The enzyme catalyses ATP + H2O = ADP + phosphate + H(+). Functionally, the RuvA-RuvB-RuvC complex processes Holliday junction (HJ) DNA during genetic recombination and DNA repair, while the RuvA-RuvB complex plays an important role in the rescue of blocked DNA replication forks via replication fork reversal (RFR). RuvA specifically binds to HJ cruciform DNA, conferring on it an open structure. The RuvB hexamer acts as an ATP-dependent pump, pulling dsDNA into and through the RuvAB complex. RuvB forms 2 homohexamers on either side of HJ DNA bound by 1 or 2 RuvA tetramers; 4 subunits per hexamer contact DNA at a time. Coordinated motions by a converter formed by DNA-disengaged RuvB subunits stimulates ATP hydrolysis and nucleotide exchange. Immobilization of the converter enables RuvB to convert the ATP-contained energy into a lever motion, pulling 2 nucleotides of DNA out of the RuvA tetramer per ATP hydrolyzed, thus driving DNA branch migration. The RuvB motors rotate together with the DNA substrate, which together with the progressing nucleotide cycle form the mechanistic basis for DNA recombination by continuous HJ branch migration. Branch migration allows RuvC to scan DNA until it finds its consensus sequence, where it cleaves and resolves cruciform DNA. The chain is Holliday junction branch migration complex subunit RuvB from Marinomonas sp. (strain MWYL1).